The primary structure comprises 409 residues: DEP domain-containing mTOR-interacting protein (409 aa).

M1 is subject to N-acetylmethionine. The disordered stretch occupies residues 1–25 (MEEGGSTGSAGSDSSTSGSGGAQQR). DEP domains are found at residues 36 to 119 (TGEQ…RFRK) and 145 to 219 (SPEN…QFRM). A DDEX motif motif is present at residues 217 to 235 (FRMNFRRRRRLMELLNEKS). Position 235 is a phosphoserine; by MAPK3 (S235). A Phosphothreonine modification is found at T241. S244 and S258 each carry phosphoserine. A Phosphothreonine modification is found at T259. 5 positions are modified to phosphoserine: S263, S265, S280, S282, and S283. Phosphoserine; by CK1 occurs at positions 286 and 287. The short motif at 286 to 291 (SSGYFS) is the BetaTrCP degron motif element. Y289 is modified (phosphotyrosine; by SYK). S291 bears the Phosphoserine; by CK1 mark. The residue at position 293 (S293) is a Phosphoserine; by MTOR. T295 carries the phosphothreonine; by MTOR modification. S297 and S298 each carry phosphoserine. Phosphoserine; by MTOR is present on S299. One can recognise a PDZ domain in the interval 330–407 (TFTIVGDAVG…TIVMEVMEEL (78 aa)).

As to quaternary structure, associated component of the mechanistic target of rapamycin complex 1 (mTORC1) which contains MTOR, MLST8 and RPTOR. Associated component of the mechanistic target of rapamycin complex 2 (mTORC2) which contains MTOR, MLST8, PROTOR1, RICTOR, MAPKAP1 and DEPTOR. Interacts (via PDZ domain) with MTOR; interacts with MTOR within both mTORC1 and mTORC2. Interacts (via PDZ domain) with MINAR1 (via N-terminus). Interacts with SIK3. In terms of processing, phosphorylation weakens interaction with MTOR within mTORC1 and mTORC2. Phosphorylated at Ser-286, Ser-287 and Ser-291 in response to mitogenic stimulation by MTOR: DEPTOR is either directly phosphorylated by MTOR or indirectly via proteins kinases that are activated by MTOR, such as CK1/CSNK1A1. Phosphorylation at Ser-286, Ser-287 and Ser-291 promotes ubiquitination by the SCF(BTRC) complex, followed by degradation. Phosphorylation at Ser-235 by MAPK3/ERK1 promotes deubiquitination by USP7, enhancing its stability. Phosphorylation at Tyr-289 by SYK impairs its interaction with MTOR, promoting mTORC1 and mTORC2 signaling. Post-translationally, ubiquitinated; leading to proteasomal degradation. Ubiquitination by the SCF(BTRC) and SCF(FBXW11) complexes following phosphorylation at Ser-286, Ser-287 and Ser-291 by MTOR, leads to its degradation by the proteasome. Deubiquitinated by OTUB1 in response to amino acid via a non-canonical mechanism, leading to DEPTOR stability. Deubiquitinated by USP7 following phosphorylation at Ser-235, promoting its stability.

The protein localises to the lysosome membrane. With respect to regulation, inhibited upon phosphatidic acid-binding: phosphatidic acid produced upon mitogenic stimulation promotes DEPTOR dissociatiom from the mTORC1 and mTORC2 complexes, leading to their activation. Specifically binds unsaturated phosphatidic acid, such as 16:0-18:1, 18:0-18:1 and di-18:1. Inhibited when nutrients are present via a feedback loop: phosphorylation by MTOR promotes DEPTOR ubiquitination and degradation. Negative regulator of the mTORC1 and mTORC2 complexes: inhibits the protein kinase activity of MTOR, thereby inactivating both complexes. DEPTOR inhibits mTORC1 and mTORC2 to induce autophagy. In contrast to AKT1S1/PRAS40, only partially inhibits mTORC1 activity. The chain is DEP domain-containing mTOR-interacting protein from Homo sapiens (Human).